A 496-amino-acid chain; its full sequence is Pituitary adenylate cyclase-activating polypeptide type I receptor (496 aa).

Residues 1 to 20 (MARTLQLSLTALLLLPMAIA) form the signal peptide. Residues 21–152 (MHSDCIFKKE…SGDQDYYYLS (132 aa)) lie on the Extracellular side of the membrane. 3 disulfide bridges follow: cysteine 34–cysteine 63, cysteine 54–cysteine 118, and cysteine 77–cysteine 134. Asparagine 48, asparagine 60, and asparagine 117 each carry an N-linked (GlcNAc...) asparagine glycan. The segment at 125 to 139 (EPFPHYFDACGFDDY) is important for ADCYAP1/PACAP ligand binding and specificity. The segment at 125 to 139 (EPFPHYFDACGFDDY) is important for ligand binding and specificity. A helical membrane pass occupies residues 153-177 (VKALYTVGYSTSLVTLTTAMVILCR). Over 178–187 (FRKLHCTRNF) the chain is Cytoplasmic. Residues 188 to 208 (IHMNLFVSFMLRAISVFIKDW) form a helical membrane-spanning segment. The Extracellular segment spans residues 209 to 223 (ILYAEQDSSHCFVST). Residues 224-249 (VECKAVMVFFHYCVVSNYFWLFIEGL) traverse the membrane as a helical segment. A disulfide bridge connects residues cysteine 226 and cysteine 296. Residues 250–267 (YLFTLLVETFFPERRYFY) are Cytoplasmic-facing. The chain crosses the membrane as a helical span at residues 268 to 290 (WYTIIGWGTPTVCVTVWAVLRLY). Over 291–302 (FDDAGCWDMNDS) the chain is Extracellular. Residues 303 to 329 (TALWWVIKGPVVGSIMVNFVLFIGIII) form a helical membrane-spanning segment. Over 330–347 (ILVQKLQSPDMGGNESSI) the chain is Cytoplasmic. Residues 348-402 (YFSCVQKCYCKPQRAQQHSCKMSELSTITLRLARSTLLLIPLFGIHYTVFAFSPE) form a helical membrane-spanning segment. At 403–407 (NVSKR) the chain is on the extracellular side. Residues 408–431 (ERLVFELGLGSFQGFVVAVLYCFL) traverse the membrane as a helical segment. The Cytoplasmic portion of the chain corresponds to 432–496 (NGEVQAEIKR…SSLPADNLAT (65 aa)). Residues serine 462 and serine 475 each carry the phosphoserine modification.

It belongs to the G-protein coupled receptor 2 family. In terms of assembly, interacts with maxadilan, a vasodilator peptide from Lutzomyia longipalpis saliva; the interaction results in ADCYAP1R1 activation.

The protein resides in the cell membrane. Its function is as follows. G protein-coupled receptor activated by the neuropeptide pituitary adenylate cyclase-activating polypeptide (ADCYAP1/PACAP). Binds both PACAP27 and PACAP38 bioactive peptides. Ligand binding causes a conformation change that triggers signaling via guanine nucleotide-binding proteins (G proteins) and modulates the activity of downstream effectors. Activates cAMP-dependent pathway. May regulate the release of adrenocorticotropin, luteinizing hormone, growth hormone, prolactin, epinephrine, and catecholamine. May play a role in spermatogenesis and sperm motility. Causes smooth muscle relaxation and secretion in the gastrointestinal tract. In Mus musculus (Mouse), this protein is Pituitary adenylate cyclase-activating polypeptide type I receptor.